Here is a 158-residue protein sequence, read N- to C-terminus: Cyclic pyranopterin monophosphate synthase (158 aa).

Residues 74 to 76 and 112 to 113 contribute to the substrate site; these read MCH and ME. The active site involves Asp-127.

Belongs to the MoaC family. As to quaternary structure, homohexamer; trimer of dimers.

The catalysed reaction is (8S)-3',8-cyclo-7,8-dihydroguanosine 5'-triphosphate = cyclic pyranopterin phosphate + diphosphate. The protein operates within cofactor biosynthesis; molybdopterin biosynthesis. Its function is as follows. Catalyzes the conversion of (8S)-3',8-cyclo-7,8-dihydroguanosine 5'-triphosphate to cyclic pyranopterin monophosphate (cPMP). The chain is Cyclic pyranopterin monophosphate synthase from Helicobacter pylori (strain Shi470).